Consider the following 581-residue polypeptide: Zinc finger protein 674 (581 aa).

The region spanning 8–79 (LTFKDVFVDF…DGGTPVRTCA (72 aa)) is the KRAB domain. 4 consecutive C2H2-type zinc fingers follow at residues 224 to 246 (YKCTECGKVFIQKANLVVHQRTH), 252 to 274 (YECCECAKAFSQKSTLIAHQRTH), 280 to 302 (YECSECGKTFIQKSTLIKHQRTH), and 308 to 330 (FVCDKCPKAFKSSYHLIRHEKTH). The segment covering 357 to 371 (PQCSEHGKASDEKPS) has biased composition (basic and acidic residues). The interval 357 to 377 (PQCSEHGKASDEKPSPTKHWR) is disordered. 7 C2H2-type zinc fingers span residues 385 to 407 (YECSKCGKSFRGKSHLSVHQRIH), 413 to 435 (YECSICGKTFSGKSHLSVHHRTH), 441 to 463 (YECRRCGKAFGEKSTLIVHQRMH), 469 to 491 (YKCNECGKAFSEKSPLIKHQRIH), 497 to 519 (YECTDCKKAFSRKSTLIKHQRIH), 525 to 547 (YKCSECGKAFSVKSTLIVHHRTH), and 553 to 575 (YECRDCGKAFSGKSTLIKHQRSH).

It belongs to the krueppel C2H2-type zinc-finger protein family. In terms of tissue distribution, expressed in testis.

The protein localises to the nucleus. Its function is as follows. May be involved in transcriptional regulation. In Homo sapiens (Human), this protein is Zinc finger protein 674 (ZNF674).